The chain runs to 586 residues: Actin-related protein 9 (586 aa).

The disordered stretch occupies residues Ser-141–Asn-169.

The protein belongs to the actin family. ARP8 subfamily.

The chain is Actin-related protein 9 (ARP9) from Oryza sativa subsp. indica (Rice).